A 123-amino-acid chain; its full sequence is MRTQSLLLLGALLAVGSQLPAVFGRKKGEKSGGCPPDDGPCLLSVPDQCVEDSQCPLTRKCCYRACFRQCVPRVSVKLGSCPEDQLRCLSPMNHLCHKDSDCSGKKRCCHSACGRDCRDPARG.

The signal sequence occupies residues 1–24; the sequence is MRTQSLLLLGALLAVGSQLPAVFG. WAP domains follow at residues 27–73 and 74–121; these read KGEK…CVPR and VSVK…RDPA. Intrachain disulfides connect Cys-34–Cys-62, Cys-41–Cys-66, Cys-49–Cys-61, Cys-55–Cys-70, Cys-81–Cys-109, Cys-88–Cys-113, Cys-96–Cys-108, and Cys-102–Cys-117.

It localises to the secreted. In terms of biological role, putative acid-stable proteinase inhibitor. The sequence is that of WAP four-disulfide core domain protein 5 (WFDC5) from Pan troglodytes (Chimpanzee).